We begin with the raw amino-acid sequence, 87 residues long: uncharacterized protein (87 aa).

The chain crosses the membrane as a helical span at residues 29-49 (ILWMIIFVVIIAVIIYILISP).

Its subcellular location is the membrane. This is an uncharacterized protein from Methanocaldococcus jannaschii (strain ATCC 43067 / DSM 2661 / JAL-1 / JCM 10045 / NBRC 100440) (Methanococcus jannaschii).